The sequence spans 387 residues: Methylthioribose-1-phosphate isomerase (387 aa).

Asp257 acts as the Proton donor in catalysis.

Belongs to the eIF-2B alpha/beta/delta subunits family. MtnA subfamily.

The protein resides in the cytoplasm. It localises to the nucleus. The catalysed reaction is 5-(methylsulfanyl)-alpha-D-ribose 1-phosphate = 5-(methylsulfanyl)-D-ribulose 1-phosphate. It participates in amino-acid biosynthesis; L-methionine biosynthesis via salvage pathway; L-methionine from S-methyl-5-thio-alpha-D-ribose 1-phosphate: step 1/6. Its function is as follows. Catalyzes the interconversion of methylthioribose-1-phosphate (MTR-1-P) into methylthioribulose-1-phosphate (MTRu-1-P). In Aspergillus fumigatus (strain CBS 144.89 / FGSC A1163 / CEA10) (Neosartorya fumigata), this protein is Methylthioribose-1-phosphate isomerase (mri1).